Reading from the N-terminus, the 160-residue chain is Transcription elongation factor GreA 2 (160 aa).

A coiled-coil region spans residues 9–73; it reads MTEEGKVKLE…RIKTVEHMLQ (65 aa).

Belongs to the GreA/GreB family.

Its function is as follows. Necessary for efficient RNA polymerase transcription elongation past template-encoded arresting sites. The arresting sites in DNA have the property of trapping a certain fraction of elongating RNA polymerases that pass through, resulting in locked ternary complexes. Cleavage of the nascent transcript by cleavage factors such as GreA or GreB allows the resumption of elongation from the new 3'terminus. GreA releases sequences of 2 to 3 nucleotides. This chain is Transcription elongation factor GreA 2, found in Lactiplantibacillus plantarum (strain ATCC BAA-793 / NCIMB 8826 / WCFS1) (Lactobacillus plantarum).